A 200-amino-acid chain; its full sequence is 3-isopropylmalate dehydratase small subunit (200 aa).

It belongs to the LeuD family. LeuD type 1 subfamily. Heterodimer of LeuC and LeuD.

It catalyses the reaction (2R,3S)-3-isopropylmalate = (2S)-2-isopropylmalate. The protein operates within amino-acid biosynthesis; L-leucine biosynthesis; L-leucine from 3-methyl-2-oxobutanoate: step 2/4. In terms of biological role, catalyzes the isomerization between 2-isopropylmalate and 3-isopropylmalate, via the formation of 2-isopropylmaleate. The chain is 3-isopropylmalate dehydratase small subunit from Actinobacillus pleuropneumoniae serotype 3 (strain JL03).